The sequence spans 163 residues: Large ribosomal subunit protein mL59 (163 aa).

The segment at 33-53 (PAGADPETHKTPYQEESPNPF) is disordered.

The protein belongs to the mitochondrion-specific ribosomal protein mL59 family. Component of the mitochondrial large ribosomal subunit (mt-LSU). Mature N.crassa 74S mitochondrial ribosomes consist of a small (37S) and a large (54S) subunit. The 37S small subunit contains a 16S ribosomal RNA (16S mt-rRNA) and 32 different proteins. The 54S large subunit contains a 23S rRNA (23S mt-rRNA) and 42 different proteins.

It localises to the mitochondrion. Functionally, component of the mitochondrial ribosome (mitoribosome), a dedicated translation machinery responsible for the synthesis of mitochondrial genome-encoded proteins, including at least some of the essential transmembrane subunits of the mitochondrial respiratory chain. The mitoribosomes are attached to the mitochondrial inner membrane and translation products are cotranslationally integrated into the membrane. This chain is Large ribosomal subunit protein mL59 (mrpl25), found in Neurospora crassa (strain ATCC 24698 / 74-OR23-1A / CBS 708.71 / DSM 1257 / FGSC 987).